Reading from the N-terminus, the 234-residue chain is Triosephosphate isomerase (234 aa).

8-10 is a binding site for substrate; sequence NFK. Catalysis depends on His90, which acts as the Electrophile. Glu159 acts as the Proton acceptor in catalysis. Substrate contacts are provided by Gly165 and Ser197.

The protein belongs to the triosephosphate isomerase family. Homodimer.

It is found in the cytoplasm. It catalyses the reaction D-glyceraldehyde 3-phosphate = dihydroxyacetone phosphate. It participates in carbohydrate biosynthesis; gluconeogenesis. Its pathway is carbohydrate degradation; glycolysis; D-glyceraldehyde 3-phosphate from glycerone phosphate: step 1/1. Functionally, involved in the gluconeogenesis. Catalyzes stereospecifically the conversion of dihydroxyacetone phosphate (DHAP) to D-glyceraldehyde-3-phosphate (G3P). The polypeptide is Triosephosphate isomerase (Helicobacter pylori (strain G27)).